Reading from the N-terminus, the 283-residue chain is Homeobox protein six1a (283 aa).

The homeobox DNA-binding region spans 124-183 (GEETSYCFKEKSRSVLREWYTHNPYPSPREKRELAEATGLTTTQVSNWFKNRRQRDRAAE). Positions 168-264 (VSNWFKNRRQ…PLHGMQGHPH (97 aa)) are disordered. The span at 179–190 (DRAAEAKERENG) shows a compositional bias: basic and acidic residues. Residues 237–248 (MNNPAAPAYPMP) are compositionally biased toward low complexity.

The protein belongs to the SIX/Sine oculis homeobox family.

It is found in the nucleus. The protein resides in the cytoplasm. Functionally, transcription factor that is involved in the regulation of cell proliferation, apoptosis and embryonic development. Depending on context, functions as a transcriptional repressor or activator. Plays an important role in the development of the inner ear, where it promotes hair cell proliferation and inhibits proliferation of neural progenitor cells. Required for normal myogenesis. Plays a role in the development of fast muscle fibers throughout the body, as well as the development of craniofacial muscles. The chain is Homeobox protein six1a (six1a) from Danio rerio (Zebrafish).